The sequence spans 137 residues: Large ribosomal subunit protein uL16 (137 aa).

The protein belongs to the universal ribosomal protein uL16 family. In terms of assembly, part of the 50S ribosomal subunit.

In terms of biological role, binds 23S rRNA and is also seen to make contacts with the A and possibly P site tRNAs. The sequence is that of Large ribosomal subunit protein uL16 from Streptococcus uberis (strain ATCC BAA-854 / 0140J).